The primary structure comprises 162 residues: Crossover junction endodeoxyribonuclease RuvC (162 aa).

Active-site residues include Asp7, Glu67, and Asp140. 3 residues coordinate Mg(2+): Asp7, Glu67, and Asp140.

Belongs to the RuvC family. In terms of assembly, homodimer which binds Holliday junction (HJ) DNA. The HJ becomes 2-fold symmetrical on binding to RuvC with unstacked arms; it has a different conformation from HJ DNA in complex with RuvA. In the full resolvosome a probable DNA-RuvA(4)-RuvB(12)-RuvC(2) complex forms which resolves the HJ. Requires Mg(2+) as cofactor.

It localises to the cytoplasm. The enzyme catalyses Endonucleolytic cleavage at a junction such as a reciprocal single-stranded crossover between two homologous DNA duplexes (Holliday junction).. Its function is as follows. The RuvA-RuvB-RuvC complex processes Holliday junction (HJ) DNA during genetic recombination and DNA repair. Endonuclease that resolves HJ intermediates. Cleaves cruciform DNA by making single-stranded nicks across the HJ at symmetrical positions within the homologous arms, yielding a 5'-phosphate and a 3'-hydroxyl group; requires a central core of homology in the junction. The consensus cleavage sequence is 5'-(A/T)TT(C/G)-3'. Cleavage occurs on the 3'-side of the TT dinucleotide at the point of strand exchange. HJ branch migration catalyzed by RuvA-RuvB allows RuvC to scan DNA until it finds its consensus sequence, where it cleaves and resolves the cruciform DNA. The protein is Crossover junction endodeoxyribonuclease RuvC of Wolinella succinogenes (strain ATCC 29543 / DSM 1740 / CCUG 13145 / JCM 31913 / LMG 7466 / NCTC 11488 / FDC 602W) (Vibrio succinogenes).